Here is a 278-residue protein sequence, read N- to C-terminus: MRFGIVARRDREAALKLAYRVYDFLKVSGYDVLVDRETFENLPEFEEGDVVPLEEFDVDFIIAIGGDGTILRIEHKTKKDFPILGINMGTLGFLTEVEPHETFFALSRLLEGDYWIDERMKLRTYLNGENSVPDALNEDAILTGVPGKIVHLKYYVDGGLADEVRSDGVIVSTPTGSTGYALSAGGPFVDPRLELFVIAPINPIALSSRPMVVPSSSEIEIVPLPPERGLILTVDGQFYTHLSPDTEIKIKKSPRKARFVRFSHEIYPRYPFRLKKRF.

Residue Asp67 is the Proton acceptor of the active site. NAD(+)-binding positions include 67–68 (DG), Arg72, 137–138 (NE), Lys148, Arg165, Asp167, 178–183 (TGYALS), and Gln237.

Belongs to the NAD kinase family. It depends on a divalent metal cation as a cofactor.

The protein resides in the cytoplasm. It carries out the reaction NAD(+) + ATP = ADP + NADP(+) + H(+). Its function is as follows. Involved in the regulation of the intracellular balance of NAD and NADP, and is a key enzyme in the biosynthesis of NADP. Catalyzes specifically the phosphorylation on 2'-hydroxyl of the adenosine moiety of NAD to yield NADP. The sequence is that of NAD kinase from Thermococcus gammatolerans (strain DSM 15229 / JCM 11827 / EJ3).